The sequence spans 242 residues: Floral homeotic protein AGAMOUS (242 aa).

Residues 19–73 (RGKIEIKRIENTTNRQVTFCKRRNGLLKKAYELSVLCDAEVALIVFSSRGRLYEY) form the MADS-box domain. In terms of domain architecture, K-box spans 103-193 (AQYYQQEASK…RAKIAETERS (91 aa)).

Expressed exclusively in stamens and carpels.

The protein resides in the nucleus. In terms of biological role, probable transcription factor involved in regulating genes that determines stamen and carpel development in wild-type flowers. The sequence is that of Floral homeotic protein AGAMOUS (AG1) from Petunia hybrida (Petunia).